The chain runs to 126 residues: Larval cuticle protein 2 (126 aa).

Residues 1–16 form the signal peptide; the sequence is MFKFVMILAVVGVATA. The 62-residue stretch at 39-100 folds into the Chitin-binding type R&amp;R domain; the sequence is ADGFDSSLHT…PSGAWIPTPP (62 aa).

In terms of biological role, component of the larval cuticle. This Drosophila melanogaster (Fruit fly) protein is Larval cuticle protein 2 (Lcp2).